Reading from the N-terminus, the 183-residue chain is Photosystem I assembly protein Ycf4 (183 aa).

The next 2 helical transmembrane spans lie at N17–Y39 and F59–Y81.

This sequence belongs to the Ycf4 family.

Its subcellular location is the plastid. The protein resides in the chloroplast thylakoid membrane. Functionally, seems to be required for the assembly of the photosystem I complex. The chain is Photosystem I assembly protein Ycf4 from Cyanidium caldarium (Red alga).